The chain runs to 37 residues: MKVRPSVKPICEKCKVIKRHGHVMVICENPKHKQKQG.

It belongs to the bacterial ribosomal protein bL36 family.

This is Large ribosomal subunit protein bL36 from Symbiobacterium thermophilum (strain DSM 24528 / JCM 14929 / IAM 14863 / T).